Consider the following 1317-residue polypeptide: ABC transporter C family member 14 (1317 aa).

The 286-residue stretch at 119 to 404 folds into the ABC transmembrane type-1 1 domain; that stretch reads NKYALISNIF…LPEDIYKAIG (286 aa). Helical transmembrane passes span 127–147, 156–176, 249–269, 341–361, and 375–395; these read IFIT…INYI, SILK…GQSI, ILIL…VGFG, VLFW…VLVS, and LDVT…LIYL. The segment at 426–451 is disordered; it reads ENNQNINFNNNNNNNNNNKNNNNNDD. Positions 427-449 are enriched in low complexity; sequence NNQNINFNNNNNNNNNNKNNNNN. An ABC transporter 1 domain is found at 490-710; the sequence is ENEENIKINE…ISDKNDPNLI (221 aa). 522–529 provides a ligand contact to ATP; that stretch reads GVVGSGKT. 5 consecutive transmembrane segments (helical) span residues 734 to 754, 778 to 798, 871 to 891, 969 to 989, and 992 to 1012; these read YFSY…FFIG, DSFY…LLMI, LISI…LFII, LEVM…LFTS, and GLAA…SWGV. Residues 744 to 1027 enclose the ABC transmembrane type-1 2 domain; the sequence is LFITISLFFI…LEVKMNSFQR (284 aa). An ABC transporter 2 domain is found at 1071–1306; sequence IEFKNVEIKY…PNSKFNKLIK (236 aa). Residue 1105–1112 participates in ATP binding; it reads GRTGAGKT.

This sequence belongs to the ABC transporter superfamily. ABCC family. Conjugate transporter (TC 3.A.1.208) subfamily.

Its subcellular location is the membrane. The sequence is that of ABC transporter C family member 14 (abcC14) from Dictyostelium discoideum (Social amoeba).